Consider the following 295-residue polypeptide: Protease HtpX (295 aa).

The next 2 membrane-spanning stretches (helical) occupy residues 4 to 24 (ILLF…TLSL) and 42 to 62 (QLLV…LFIS). Position 147 (His147) interacts with Zn(2+). Glu148 is an active-site residue. Position 151 (His151) interacts with Zn(2+). Transmembrane regions (helical) follow at residues 158-178 (VTLA…ARII) and 199-219 (ITTI…VMWF). Zn(2+) is bound at residue Glu224.

Belongs to the peptidase M48B family. Requires Zn(2+) as cofactor.

The protein resides in the cell inner membrane. The polypeptide is Protease HtpX (Pseudomonas syringae pv. syringae (strain B728a)).